The following is a 214-amino-acid chain: Melanoregulin (214 aa).

The Cholesterol-binding sequence motif signature appears at 162 to 172; the sequence is LSERYLFVVDR. At Ser213 the chain carries Phosphoserine.

The protein belongs to the melanoregulin family. Identified in a complex with RILP and DCTN1; interacts directly with RILP, but does not interact directly with DCTN1. Interacts with PRPH2. Post-translationally, palmitoylated. Palmitoylation is required to maintain the protein at the melanosome membrane. In terms of tissue distribution, expressed in photoreceptor cells (at protein level).

It is found in the apical cell membrane. Its subcellular location is the melanosome membrane. The protein localises to the lysosome membrane. It localises to the cytoplasmic vesicle membrane. Its function is as follows. Probably functions as a cargo-recognition protein that couples cytoplasmic vesicles to the transport machinery. Plays a role in hair pigmentation, a process that involves shedding of melanosome-containing vesicles from melanocytes, followed by phagocytosis of the melanosome-containing vesicles by keratinocytes. Functions on melanosomes as receptor for RILP and the complex formed by RILP and DCTN1, and thereby contributes to retrograde melanosome transport from the cell periphery to the center. Overexpression causes accumulation of late endosomes and/or lysosomes at the microtubule organising center (MTOC) at the center of the cell. Probably binds cholesterol and requires the presence of cholesterol in membranes to function in microtubule-mediated retrograde organelle transport. Binds phosphatidylinositol 3-phosphate, phosphatidylinositol 4-phosphate, phosphatidylinositol 5-phosphate and phosphatidylinositol 3,5-bisphosphate, but not phosphatidylinositol 3,4-bisphosphate or phosphatidylinositol 4,5-bisphosphate. Required for normal phagosome clearing and normal activation of lysosomal enzymes in lysosomes from retinal pigment epithelium cells. Required for normal degradation of the lipofuscin component N-retinylidene-N-retinylethanolamine (A2E) in the eye. May function in membrane fusion and regulate the biogenesis of disk membranes of photoreceptor rod cells. The chain is Melanoregulin (MREG) from Homo sapiens (Human).